A 78-amino-acid polypeptide reads, in one-letter code: Exodeoxyribonuclease 7 small subunit (78 aa).

Belongs to the XseB family. Heterooligomer composed of large and small subunits.

The protein resides in the cytoplasm. It carries out the reaction Exonucleolytic cleavage in either 5'- to 3'- or 3'- to 5'-direction to yield nucleoside 5'-phosphates.. Functionally, bidirectionally degrades single-stranded DNA into large acid-insoluble oligonucleotides, which are then degraded further into small acid-soluble oligonucleotides. This Mycobacterium leprae (strain TN) protein is Exodeoxyribonuclease 7 small subunit.